Here is an 83-residue protein sequence, read N- to C-terminus: Small ribosomal subunit protein bS16 (83 aa).

It belongs to the bacterial ribosomal protein bS16 family.

In Pseudoalteromonas atlantica (strain T6c / ATCC BAA-1087), this protein is Small ribosomal subunit protein bS16.